A 208-amino-acid chain; its full sequence is FMN-dependent NADH:quinone oxidoreductase (208 aa).

Residues 17–19 (SNS), 99–102 (MWNL), and 143–146 (SRGG) contribute to the FMN site.

Belongs to the azoreductase type 1 family. As to quaternary structure, homodimer. FMN serves as cofactor.

It carries out the reaction 2 a quinone + NADH + H(+) = 2 a 1,4-benzosemiquinone + NAD(+). It catalyses the reaction N,N-dimethyl-1,4-phenylenediamine + anthranilate + 2 NAD(+) = 2-(4-dimethylaminophenyl)diazenylbenzoate + 2 NADH + 2 H(+). Quinone reductase that provides resistance to thiol-specific stress caused by electrophilic quinones. In terms of biological role, also exhibits azoreductase activity. Catalyzes the reductive cleavage of the azo bond in aromatic azo compounds to the corresponding amines. The polypeptide is FMN-dependent NADH:quinone oxidoreductase (Staphylococcus aureus (strain MSSA476)).